The sequence spans 210 residues: Redox-sensing transcriptional repressor Rex (210 aa).

A DNA-binding region (H-T-H motif) is located at residues 16 to 55 (VYSRHLTDVDRKGIVTISSGDIAEGVGVSPAQVRKDLAYF). 90–95 (GMGNLG) contacts NAD(+).

The protein belongs to the transcriptional regulatory Rex family. As to quaternary structure, homodimer.

It localises to the cytoplasm. Modulates transcription in response to changes in cellular NADH/NAD(+) redox state. The protein is Redox-sensing transcriptional repressor Rex of Desulfitobacterium hafniense (strain DSM 10664 / DCB-2).